We begin with the raw amino-acid sequence, 315 residues long: Calcium homeostasis modulator protein 6 (315 aa).

Over Met-1–Gly-21 the chain is Cytoplasmic. A helical transmembrane segment spans residues Leu-22–Val-37. At Ala-38–Ala-46 the chain is on the extracellular side. Cystine bridges form between Cys-41–Cys-126, Cys-43–Cys-155, and Cys-139–Cys-146. A helical transmembrane segment spans residues Trp-47 to Tyr-68. At Val-69 to Ile-102 the chain is on the cytoplasmic side. A helical membrane pass occupies residues Ser-103–Ala-127. The Extracellular portion of the chain corresponds to Ala-128–Asp-169. The chain crosses the membrane as a helical span at residues Leu-170–Phe-192. The Cytoplasmic portion of the chain corresponds to Thr-193–Leu-315.

The protein belongs to the CALHM family. As to quaternary structure, oligomerizes to form decameric and undecameric channels. Post-translationally, N-glycosylated. In terms of tissue distribution, placenta.

Its subcellular location is the cell membrane. The enzyme catalyses ATP(in) = ATP(out). Its function is as follows. Pore-forming subunit of an ATP-permeable channel. In response to pathogen-derived and proinflammatory stimuli, relocates from intracellular compartments to NK-dendritic cell and NK-macrophage immune synapses where it mediates ATP efflux and NK cell activation involved in antimicrobial and antitumor responses. May assemble to form gap junction channel-like structures with gating and ion conductance likely regulated by membrane lipids and voltage rather than by extracellular calcium levels. In Homo sapiens (Human), this protein is Calcium homeostasis modulator protein 6.